The following is a 246-amino-acid chain: UDP-N-acetyl-D-mannosaminuronic acid transferase (246 aa).

It belongs to the glycosyltransferase 26 family.

The enzyme catalyses UDP-N-acetyl-alpha-D-mannosaminouronate + N-acetyl-alpha-D-glucosaminyl-di-trans,octa-cis-undecaprenyl diphosphate = beta-D-ManNAcA-(1-&gt;4)-alpha-D-GlcNAc-di-trans,octa-cis-undecaprenyl diphosphate + UDP + H(+). The protein operates within bacterial outer membrane biogenesis; enterobacterial common antigen biosynthesis. Its function is as follows. Catalyzes the synthesis of Und-PP-GlcNAc-ManNAcA (Lipid II), the second lipid-linked intermediate involved in enterobacterial common antigen (ECA) synthesis. This Salmonella paratyphi A (strain ATCC 9150 / SARB42) protein is UDP-N-acetyl-D-mannosaminuronic acid transferase.